The chain runs to 470 residues: tRNA-2-methylthio-N(6)-dimethylallyladenosine synthase (470 aa).

Residues 1-116 (MTYTVRTYGC…LPALLRRSRH (116 aa)) enclose the MTTase N-terminal domain. [4Fe-4S] cluster contacts are provided by cysteine 10, cysteine 45, cysteine 79, cysteine 153, cysteine 157, and cysteine 160. A Radical SAM core domain is found at 139 to 369 (RESNYSAWVS…LDLQNRIALE (231 aa)). The 68-residue stretch at 372–439 (RKLIGKEVEL…PYHLIGDNAL (68 aa)) folds into the TRAM domain.

This sequence belongs to the methylthiotransferase family. MiaB subfamily. Monomer. [4Fe-4S] cluster is required as a cofactor.

The protein resides in the cytoplasm. It catalyses the reaction N(6)-dimethylallyladenosine(37) in tRNA + (sulfur carrier)-SH + AH2 + 2 S-adenosyl-L-methionine = 2-methylsulfanyl-N(6)-dimethylallyladenosine(37) in tRNA + (sulfur carrier)-H + 5'-deoxyadenosine + L-methionine + A + S-adenosyl-L-homocysteine + 2 H(+). Catalyzes the methylthiolation of N6-(dimethylallyl)adenosine (i(6)A), leading to the formation of 2-methylthio-N6-(dimethylallyl)adenosine (ms(2)i(6)A) at position 37 in tRNAs that read codons beginning with uridine. This chain is tRNA-2-methylthio-N(6)-dimethylallyladenosine synthase, found in Tropheryma whipplei (strain Twist) (Whipple's bacillus).